A 212-amino-acid polypeptide reads, in one-letter code: Large ribosomal subunit protein uL3 (212 aa).

Gln-153 carries the N5-methylglutamine modification.

This sequence belongs to the universal ribosomal protein uL3 family. As to quaternary structure, part of the 50S ribosomal subunit. Forms a cluster with proteins L14 and L19. Methylated by PrmB.

In terms of biological role, one of the primary rRNA binding proteins, it binds directly near the 3'-end of the 23S rRNA, where it nucleates assembly of the 50S subunit. In Idiomarina loihiensis (strain ATCC BAA-735 / DSM 15497 / L2-TR), this protein is Large ribosomal subunit protein uL3.